The chain runs to 122 residues: Large ribosomal subunit protein uL14 (122 aa).

Belongs to the universal ribosomal protein uL14 family. In terms of assembly, part of the 50S ribosomal subunit. Forms a cluster with proteins L3 and L19. In the 70S ribosome, L14 and L19 interact and together make contacts with the 16S rRNA in bridges B5 and B8.

In terms of biological role, binds to 23S rRNA. Forms part of two intersubunit bridges in the 70S ribosome. The chain is Large ribosomal subunit protein uL14 from Teredinibacter turnerae (strain ATCC 39867 / T7901).